Here is a 582-residue protein sequence, read N- to C-terminus: MHNDKDLSTWQTFRRLWPTIAPFKAGLIVAGVALILNAASDTFMLSLLKPLLDDGFGKTDRSVLVWMPLVVIGLMILRGITSYVSSYCISWVSGKVVMTMRRRLFGHMMGMPVSFFDKQSTGTLLSRITYDSEQVASSSSGALITVVREGASIIGLFIMMFYYSWQLSIILIVLAPIVSIAIRVVSKRFRNISKNMQNTMGQVTTSAEQMLKGHKEVLIFGGQEVETKRFDKVSNRMRLQGMKMVSASSISDPIIQLIASLALAFVLYAASFPSVMDNLTAGTITVVFSSMIALMRPLKSLTNVNAQFQRGMAACQTLFTILDSEQEKDEGKRVIERATGDVEFRNVTFTYPGRDVPALRNINLKIPAGKTVALVGRSGSGKSTIASLITRFYDIDEGEILMDGHDLREYTLASLRNQVALVSQNVHLFNDTVANNIAYARTEQYSREQIEEAARMAYAIDFINKMDNGLDTVIGENGVLLSGGQRQRIAIARALLRDSPILILDEATSALDTESERAIQAALDELQKNRTSLVIAHRLSTIEKADEIVVVEDGVIVERGTHNDLLEHRGVYAQLHKMQFGQ.

Transmembrane regions (helical) follow at residues 16 to 36, 63 to 83, 153 to 173, 253 to 273, and 275 to 295; these read LWPT…ALIL, VLVW…ITSY, IIGL…ILIV, PIIQ…ASFP, and VMDN…IALM. The 283-residue stretch at 28–310 folds into the ABC transmembrane type-1 domain; sequence IVAGVALILN…LTNVNAQFQR (283 aa). An ABC transporter domain is found at 342–578; that stretch reads VEFRNVTFTY…RGVYAQLHKM (237 aa). ATP is bound at residue 376-383; that stretch reads GRSGSGKS.

It belongs to the ABC transporter superfamily. Lipid exporter (TC 3.A.1.106) family. As to quaternary structure, homodimer.

The protein resides in the cell inner membrane. The catalysed reaction is ATP + H2O + lipid A-core oligosaccharideSide 1 = ADP + phosphate + lipid A-core oligosaccharideSide 2.. Functionally, involved in lipopolysaccharide (LPS) biosynthesis. Translocates lipid A-core from the inner to the outer leaflet of the inner membrane. Transmembrane domains (TMD) form a pore in the inner membrane and the ATP-binding domain (NBD) is responsible for energy generation. The chain is ATP-dependent lipid A-core flippase from Shigella sonnei (strain Ss046).